We begin with the raw amino-acid sequence, 207 residues long: MPRPASHLAPMPSDHPDFRSESSARLRCQPPRTNNCGTFKQPPSVAATSRPKPGNPFLQPPTKGTPPPKKKKKNHTEGCHTHEANPEPNTKHTETESPKPQTSTQHHTPITIPSSLLSQNTQREKRGLPLLTSRPSTIPANTYQPQSPHIHSHTPLQRPISTALLHQNLHIRARNIRHTGRLHGSPTKGAQTAQQAQPHPPKQLATL.

Disordered stretches follow at residues 1 to 154 (MPRP…HSHT) and 180 to 207 (GRLHGSPTKGAQTAQQAQPHPPKQLATL). 2 stretches are compositionally biased toward basic and acidic residues: residues 14–24 (DHPDFRSESSA) and 75–97 (HTEGCHTHEANPEPNTKHTETES). Composition is skewed to polar residues over residues 98–121 (PKPQTSTQHHTPITIPSSLLSQNT) and 133–149 (SRPSTIPANTYQPQSPH).

Belongs to the UPF0328 family.

The chain is UPF0328 protein ECU02_1590/ECU04_0060/ECU08_2120 from Encephalitozoon cuniculi (strain GB-M1) (Microsporidian parasite).